A 197-amino-acid polypeptide reads, in one-letter code: Small ribosomal subunit protein eS1 (197 aa).

This sequence belongs to the eukaryotic ribosomal protein eS1 family.

This is Small ribosomal subunit protein eS1 from Sulfolobus acidocaldarius (strain ATCC 33909 / DSM 639 / JCM 8929 / NBRC 15157 / NCIMB 11770).